Here is a 373-residue protein sequence, read N- to C-terminus: 4-hydroxy-3-methylbut-2-en-1-yl diphosphate synthase (flavodoxin) (373 aa).

4 residues coordinate [4Fe-4S] cluster: Cys-270, Cys-273, Cys-305, and Glu-312.

This sequence belongs to the IspG family. [4Fe-4S] cluster serves as cofactor.

The enzyme catalyses (2E)-4-hydroxy-3-methylbut-2-enyl diphosphate + oxidized [flavodoxin] + H2O + 2 H(+) = 2-C-methyl-D-erythritol 2,4-cyclic diphosphate + reduced [flavodoxin]. The protein operates within isoprenoid biosynthesis; isopentenyl diphosphate biosynthesis via DXP pathway; isopentenyl diphosphate from 1-deoxy-D-xylulose 5-phosphate: step 5/6. Its function is as follows. Converts 2C-methyl-D-erythritol 2,4-cyclodiphosphate (ME-2,4cPP) into 1-hydroxy-2-methyl-2-(E)-butenyl 4-diphosphate. The chain is 4-hydroxy-3-methylbut-2-en-1-yl diphosphate synthase (flavodoxin) from Sodalis glossinidius (strain morsitans).